Consider the following 461-residue polypeptide: Growth/differentiation factor 7 (461 aa).

An N-terminal signal peptide occupies residues 1–19; it reads MDLSAAAALCLWLLSACRP. Positions 20–315 are excised as a propeptide; sequence RDGLEAAAVL…ANLGGRRRRR (296 aa). N79 is a glycosylation site (N-linked (GlcNAc...) asparagine). The segment at 287 to 360 is disordered; the sequence is LRAAAEPPPD…GHGRRGRSRC (74 aa). The segment covering 323–350 has biased composition (gly residues); the sequence is GAQGSGGGGGGGGGGGGGGGGGGGGAGR. The segment covering 351–360 has biased composition (basic residues); that stretch reads GHGRRGRSRC. 3 cysteine pairs are disulfide-bonded: C360/C426, C389/C458, and C393/C460.

The protein belongs to the TGF-beta family. In terms of assembly, homodimer; disulfide-linked.

The protein resides in the secreted. The chain is Growth/differentiation factor 7 (Gdf7) from Mus musculus (Mouse).